The primary structure comprises 433 residues: Serine hydroxymethyltransferase (433 aa).

121-123 is a (6S)-5,6,7,8-tetrahydrofolate binding site; that stretch reads AHV. The residue at position 227 (Lys-227) is an N6-(pyridoxal phosphate)lysine. Residue Glu-243 coordinates (6S)-5,6,7,8-tetrahydrofolate.

This sequence belongs to the SHMT family. Homodimer. Pyridoxal 5'-phosphate serves as cofactor.

The protein resides in the cytoplasm. It functions in the pathway amino-acid biosynthesis; glycine biosynthesis; glycine from L-serine: step 1/1. Functionally, catalyzes the reversible interconversion of serine and glycine with a modified folate serving as the one-carbon carrier. Also exhibits a pteridine-independent aldolase activity toward beta-hydroxyamino acids, producing glycine and aldehydes, via a retro-aldol mechanism. This chain is Serine hydroxymethyltransferase, found in Saccharolobus islandicus (strain M.14.25 / Kamchatka #1) (Sulfolobus islandicus).